Consider the following 282-residue polypeptide: Putative phosphite transport system permease protein HtxC (282 aa).

The next 4 membrane-spanning stretches (helical) occupy residues 23–43, 81–101, 130–150, and 239–259; these read HFAT…VCQI, LAMA…LALM, VYAL…VLAI, and FNKM…IDFI. Residues 77–260 enclose the ABC transmembrane type-1 domain; that stretch reads AGETLAMATI…LMVSAIDFIS (184 aa).

This sequence belongs to the binding-protein-dependent transport system permease family.

It localises to the cell inner membrane. In terms of biological role, probably forms part of a binding-protein-dependent hypophosphite transporter. This chain is Putative phosphite transport system permease protein HtxC (htxC), found in Stutzerimonas stutzeri (Pseudomonas stutzeri).